Reading from the N-terminus, the 372-residue chain is RNA polymerase sigma factor SigA (372 aa).

The sigma-70 factor domain-2 stretch occupies residues 139 to 209; that stretch reads LAEANLRLVV…TRAIADQART (71 aa). Residues 163–166 carry the Interaction with polymerase core subunit RpoC motif; sequence DLIQ. Positions 218 to 294 are sigma-70 factor domain-3; that stretch reads ETINKLIRVQ…DQDALAPSDA (77 aa). The tract at residues 307–360 is sigma-70 factor domain-4; it reads VLDTLTDREENVLRLRFGLDDGRTRTLEEVGKVFGVTRERIRQIEAKALRKLRH. The H-T-H motif DNA-binding region spans 333 to 352; it reads LEEVGKVFGVTRERIRQIEA.

Belongs to the sigma-70 factor family. RpoD/SigA subfamily. In terms of assembly, interacts transiently with the RNA polymerase catalytic core.

Its subcellular location is the cytoplasm. Functionally, sigma factors are initiation factors that promote the attachment of RNA polymerase to specific initiation sites and are then released. This sigma factor is the primary sigma factor during exponential growth. The protein is RNA polymerase sigma factor SigA of Halalkalibacterium halodurans (strain ATCC BAA-125 / DSM 18197 / FERM 7344 / JCM 9153 / C-125) (Bacillus halodurans).